The chain runs to 485 residues: MRPTLALSALLLLQLLLLSTPSLSQDNGNKTDTSDITSIDQNQDKPATNQPSNATPKSSVQPPTPTSISTSSPDPKATQSSNSSVTTTSDSTTDRTSSSTSTVPTTSNSGQTVSSGGKSSDKITTALPTTLGPVNASSQPTDLNTSTKLPSTPTTNSTASPHQPVSHSEGQHTTVQSSSASVSSSDNTTLLWILTTSKPTGTSEGTQPIAISTPGITTPVSTPLQPTGSPGGTESVPTTEEFTHSTSSWTPVVSQGPSTPSSTWTSGSYKLKCDPAIKPHEELLILNLTRDSFCKGSPPNERFLELLCHSAKASFKPAEDSCALELAPILDNQAVAVKRIVIETKLSPKAVFELLKDKWDDLTEAGVIDIHLGKEGPPEVNEDRFSLPLIITIVCMASFLLLVAALYGCCHQRISQRKDQQRLTEELQTVENGYHDNPTLEVMETPSEMQEKKVVNLNGELGDSWIVPLDNLTKEDLDEEEDTHL.

A signal peptide spans M1–S24. The tract at residues S22–G267 is disordered. Topologically, residues Q25–S386 are extracellular. Over residues D26–K57 the composition is skewed to polar residues. N-linked (GlcNAc...) asparagine glycans are attached at residues N29 and N82. Low complexity predominate over residues S58–S109. 2 stretches are compositionally biased toward polar residues: residues G110 to P128 and N135 to L149. N-linked (GlcNAc...) asparagine glycans are attached at residues N135, N144, and N156. Positions P150–P161 are enriched in low complexity. Polar residues-rich tracts occupy residues Q163 to Q176, D186 to G228, and S235 to V253. N187 carries an N-linked (GlcNAc...) asparagine glycan. Low complexity predominate over residues S254–G267. N287 carries N-linked (GlcNAc...) asparagine glycosylation. Residues L387–Y407 form a helical membrane-spanning segment. Over G408–L485 the chain is Cytoplasmic. T445 is modified (phosphothreonine). S464 is modified (phosphoserine). T483 is modified (phosphothreonine).

This sequence belongs to the podocalyxin family. As to quaternary structure, monomer; when associated with the membrane raft. Oligomer; when integrated in the apical membrane. Interacts with NHERF2. Interacts (via the C-terminal PDZ-binding motif DTHL) with NHERF1 (via the PDZ domains); the interaction take place early in the secretory pathway and is necessary for its apical membrane sorting. Found in a complex with EZR, PODXL and NHERF2. Associates with the actin cytoskeleton through complex formation with EZR and NHERF2. Interacts (via the C-terminal PDZ-binding motif DTHL) with NHERF1 (via the PDZ domains); interaction is not detected in glomerular epithelium cells. Interacts (via the C-terminal PDZ-binding motif DTHL) with NHERF2 (via the PDZ 1 domain); interaction is detected in glomerular epithelium cells. Interacts with EZR. Post-translationally, N- and O-linked glycosylated. Sialoglycoprotein. Glomerular epithelium cell (podocyte) (at protein level).

The protein localises to the apical cell membrane. The protein resides in the cell projection. It is found in the microvillus. It localises to the membrane raft. Its subcellular location is the lamellipodium. The protein localises to the filopodium. The protein resides in the ruffle. It is found in the membrane. Functionally, involved in the regulation of both adhesion and cell morphology and cancer progression. Functions as an anti-adhesive molecule that maintains an open filtration pathway between neighboring foot processes in the podocyte by charge repulsion. Acts as a pro-adhesive molecule, enhancing the adherence of cells to immobilized ligands, increasing the rate of migration and cell-cell contacts in an integrin-dependent manner. Induces the formation of apical actin-dependent microvilli. Involved in the formation of a preapical plasma membrane subdomain to set up initial epithelial polarization and the apical lumen formation during renal tubulogenesis. Plays a role in cancer development and aggressiveness by inducing cell migration and invasion through its interaction with the actin-binding protein EZR. Affects EZR-dependent signaling events, leading to increased activities of the MAPK and PI3K pathways in cancer cells. This chain is Podocalyxin (Podxl), found in Rattus norvegicus (Rat).